A 116-amino-acid polypeptide reads, in one-letter code: Large ribosomal subunit protein bL17 (116 aa).

Belongs to the bacterial ribosomal protein bL17 family. In terms of assembly, part of the 50S ribosomal subunit. Contacts protein L32.

The sequence is that of Large ribosomal subunit protein bL17 from Prochlorococcus marinus (strain MIT 9301).